The chain runs to 343 residues: Small ribosomal subunit biogenesis GTPase RsgA (343 aa).

Residues 116–275 form the CP-type G domain; the sequence is RGQLKPVAAN…LIDSPGIREF (160 aa). Residues 163–166 and 217–225 contribute to the GTP site; these read NKAD and GQSGVGKSS. Cys299, Cys304, His306, and Cys312 together coordinate Zn(2+).

The protein belongs to the TRAFAC class YlqF/YawG GTPase family. RsgA subfamily. In terms of assembly, monomer. Associates with 30S ribosomal subunit, binds 16S rRNA. It depends on Zn(2+) as a cofactor.

Its subcellular location is the cytoplasm. Its function is as follows. One of several proteins that assist in the late maturation steps of the functional core of the 30S ribosomal subunit. Helps release RbfA from mature subunits. May play a role in the assembly of ribosomal proteins into the subunit. Circularly permuted GTPase that catalyzes slow GTP hydrolysis, GTPase activity is stimulated by the 30S ribosomal subunit. This Pseudomonas savastanoi pv. phaseolicola (strain 1448A / Race 6) (Pseudomonas syringae pv. phaseolicola (strain 1448A / Race 6)) protein is Small ribosomal subunit biogenesis GTPase RsgA.